Here is a 348-residue protein sequence, read N- to C-terminus: Holliday junction branch migration complex subunit RuvB (348 aa).

The segment at 1 to 184 is large ATPase domain (RuvB-L); that stretch reads MTLNRDMVSP…FGIVQRLEFY (184 aa). The ATP site is built by leucine 23, arginine 24, glycine 65, lysine 68, threonine 69, threonine 70, arginine 174, tyrosine 184, and arginine 221. Residue threonine 69 coordinates Mg(2+). The small ATPAse domain (RuvB-S) stretch occupies residues 185 to 255; the sequence is AVDHLVLIVE…VAQKALDLLD (71 aa). Residues 258-348 are head domain (RuvB-H); that stretch reads SHGFDTMDRK…QEVSDLFPNE (91 aa). Arginine 294, arginine 313, and arginine 318 together coordinate DNA.

The protein belongs to the RuvB family. Homohexamer. Forms an RuvA(8)-RuvB(12)-Holliday junction (HJ) complex. HJ DNA is sandwiched between 2 RuvA tetramers; dsDNA enters through RuvA and exits via RuvB. An RuvB hexamer assembles on each DNA strand where it exits the tetramer. Each RuvB hexamer is contacted by two RuvA subunits (via domain III) on 2 adjacent RuvB subunits; this complex drives branch migration. In the full resolvosome a probable DNA-RuvA(4)-RuvB(12)-RuvC(2) complex forms which resolves the HJ.

It is found in the cytoplasm. It carries out the reaction ATP + H2O = ADP + phosphate + H(+). The RuvA-RuvB-RuvC complex processes Holliday junction (HJ) DNA during genetic recombination and DNA repair, while the RuvA-RuvB complex plays an important role in the rescue of blocked DNA replication forks via replication fork reversal (RFR). RuvA specifically binds to HJ cruciform DNA, conferring on it an open structure. The RuvB hexamer acts as an ATP-dependent pump, pulling dsDNA into and through the RuvAB complex. RuvB forms 2 homohexamers on either side of HJ DNA bound by 1 or 2 RuvA tetramers; 4 subunits per hexamer contact DNA at a time. Coordinated motions by a converter formed by DNA-disengaged RuvB subunits stimulates ATP hydrolysis and nucleotide exchange. Immobilization of the converter enables RuvB to convert the ATP-contained energy into a lever motion, pulling 2 nucleotides of DNA out of the RuvA tetramer per ATP hydrolyzed, thus driving DNA branch migration. The RuvB motors rotate together with the DNA substrate, which together with the progressing nucleotide cycle form the mechanistic basis for DNA recombination by continuous HJ branch migration. Branch migration allows RuvC to scan DNA until it finds its consensus sequence, where it cleaves and resolves cruciform DNA. This is Holliday junction branch migration complex subunit RuvB from Nitrosococcus oceani (strain ATCC 19707 / BCRC 17464 / JCM 30415 / NCIMB 11848 / C-107).